Reading from the N-terminus, the 237-residue chain is NAD-dependent protein deacetylase (237 aa).

The 237-residue stretch at 1–237 folds into the Deacetylase sirtuin-type domain; sequence MQDITQAEAI…TIFAELTIKE (237 aa). Residues Ala25, Thr29, Arg37, Gln100, Ile102, Asp103, and His118 each contribute to the NAD(+) site. Nicotinamide contacts are provided by Ile102 and Asp103. The active-site Proton acceptor is His118. Zn(2+) is bound by residues Cys126, Cys129, His144, and Cys147. NAD(+) is bound by residues Thr185, Ser186, and Asn209.

Belongs to the sirtuin family. Class U subfamily.

The protein localises to the cytoplasm. The catalysed reaction is N(6)-acetyl-L-lysyl-[protein] + NAD(+) + H2O = 2''-O-acetyl-ADP-D-ribose + nicotinamide + L-lysyl-[protein]. Its function is as follows. NAD-dependent protein deacetylase which modulates the activities of several enzymes which are inactive in their acetylated form. This is NAD-dependent protein deacetylase from Enterococcus faecalis (strain ATCC 700802 / V583).